Reading from the N-terminus, the 55-residue chain is Large ribosomal subunit protein bL33 (55 aa).

Residues 1–11 (MAKGGREKIKL) are compositionally biased toward basic and acidic residues. Residues 1 to 29 (MAKGGREKIKLESSAGTGHFYTTSKNKRT) are disordered. Polar residues predominate over residues 14–24 (SAGTGHFYTTS).

This sequence belongs to the bacterial ribosomal protein bL33 family.

The sequence is that of Large ribosomal subunit protein bL33 from Polynucleobacter asymbioticus (strain DSM 18221 / CIP 109841 / QLW-P1DMWA-1) (Polynucleobacter necessarius subsp. asymbioticus).